A 233-amino-acid chain; its full sequence is Small ribosomal subunit protein uS2 (233 aa).

The protein belongs to the universal ribosomal protein uS2 family.

The chain is Small ribosomal subunit protein uS2 from Prochlorococcus marinus (strain MIT 9312).